The sequence spans 313 residues: Aspartoacylase (313 aa).

Residues H21 and E24 each coordinate Zn(2+). N-acetyl-L-aspartate is bound by residues R63, N70, and R71. H116 contacts Zn(2+). Positions 164 and 168 each coordinate N-acetyl-L-aspartate. The Proton donor/acceptor role is filled by E178. Y288 contributes to the N-acetyl-L-aspartate binding site.

This sequence belongs to the AspA/AstE family. Aspartoacylase subfamily. In terms of assembly, homodimer. It depends on Zn(2+) as a cofactor.

The protein resides in the cytoplasm. It localises to the nucleus. It catalyses the reaction an N-acyl-L-aspartate + H2O = a carboxylate + L-aspartate. The enzyme catalyses N-acetyl-L-aspartate + H2O = L-aspartate + acetate. In terms of biological role, catalyzes the deacetylation of N-acetylaspartic acid (NAA) to produce acetate and L-aspartate. NAA occurs in high concentration in brain and its hydrolysis NAA plays a significant part in the maintenance of intact white matter. In other tissues it acts as a scavenger of NAA from body fluids. This Pongo abelii (Sumatran orangutan) protein is Aspartoacylase.